The primary structure comprises 20 residues: Phylloseptin-O1 (20 aa).

Residue glycine 20 is modified to Glycine amide.

Expressed by the skin glands.

Its subcellular location is the secreted. Its function is as follows. Has antiprotozoal activity against T.cruzi. This is Phylloseptin-O1 (psn4) from Pithecopus oreades (Orange-legged leaf frog).